Consider the following 385-residue polypeptide: MDEIINKYQAVEKLFKEIQQGLAAYDQYKTLISEMMHYNNHIKQEYFNFLMIISPYLIRAHSGETLRNKVNNEIKRLILVENINTKISKTLVSVNFLLQKKLSTDGVKTKNMWCTNNPMLQVKTAHNLFKQLCDTQSKTQWVQTLKYKECKYCHTDMVFNTTQFGLQCPNCGCIQELMGTIFDETHFYNHDGQKAKSGIFNPNRHYRFWIEHILGRNSEQELGTKQDPCGTKVLQQLKKIIKRDNKCIALLTVENIRKMLKEINRTDLNNCVSLILRKLTGVGPPQISESILLRGEYIFTEAIKIREKVCKKGRINRNYYPYYIYKIFDAILPPNDTTNRRILQYIHLQGNDTLANNDSEWESICMELPEIKWKPTDRTHCVHFF.

Residues 166-190 (LQCPNCGCIQELMGTIFDETHFYNH) form a C2H2-type zinc finger.

The protein belongs to the asfivirus B385R family.

The protein is Zinc finger protein B385R of Ornithodoros (relapsing fever ticks).